The primary structure comprises 95 residues: Integration host factor subunit beta (95 aa).

Positions 56–76 (RAPRTGRNPKTGSSVDLEGKY) are disordered.

The protein belongs to the bacterial histone-like protein family. In terms of assembly, heterodimer of an alpha and a beta chain.

In terms of biological role, this protein is one of the two subunits of integration host factor, a specific DNA-binding protein that functions in genetic recombination as well as in transcriptional and translational control. The sequence is that of Integration host factor subunit beta from Shewanella baltica (strain OS223).